A 148-amino-acid polypeptide reads, in one-letter code: tRNA-specific adenosine deaminase (148 aa).

Positions 1–116 (MEQALKQARL…SNLRYFNSSA (116 aa)) constitute a CMP/dCMP-type deaminase domain. H48 serves as a coordination point for Zn(2+). The active-site Proton donor is E50. Zn(2+) contacts are provided by C78 and C81.

The protein belongs to the cytidine and deoxycytidylate deaminase family. As to quaternary structure, homodimer. Zn(2+) serves as cofactor.

The catalysed reaction is adenosine(34) in tRNA + H2O + H(+) = inosine(34) in tRNA + NH4(+). Catalyzes the deamination of adenosine to inosine at the wobble position 34 of tRNA(Arg2). This Rickettsia typhi (strain ATCC VR-144 / Wilmington) protein is tRNA-specific adenosine deaminase.